The chain runs to 164 residues: MADQTKIATLDSTLIDRLPTSSKTLFEAKATKALTFESIANELGRSEVAVAALFYGQSQASAADIEKLSQILDVPQSKLEAELGGFPDRGRAGPMPPVEPLIYRLYEIVQNYGYAYKAVMNEKFGDGIMSAISFSTKVEKETDEQGNNWAVITLRGKWLPFSRF.

Catalysis depends on residues R104, E107, and S130.

The protein belongs to the cyanase family.

The enzyme catalyses cyanate + hydrogencarbonate + 3 H(+) = NH4(+) + 2 CO2. Its function is as follows. Catalyzes the reaction of cyanate with bicarbonate to produce ammonia and carbon dioxide. The chain is Cyanate hydratase from Botryotinia fuckeliana (strain B05.10) (Noble rot fungus).